We begin with the raw amino-acid sequence, 482 residues long: Alanine aminotransferase 2 (482 aa).

At lysine 299 the chain carries N6-(pyridoxal phosphate)lysine.

The protein belongs to the class-I pyridoxal-phosphate-dependent aminotransferase family. Alanine aminotransferase subfamily. As to quaternary structure, homodimer. Pyridoxal 5'-phosphate serves as cofactor. In terms of processing, the N-terminus is blocked. As to expression, mesophyll and bundle sheath cells.

It catalyses the reaction L-alanine + 2-oxoglutarate = pyruvate + L-glutamate. It participates in photosynthesis; C4 acid pathway. Its pathway is amino-acid degradation; L-alanine degradation via transaminase pathway; pyruvate from L-alanine: step 1/1. Functionally, transfer of C3 units between the cytosol of mesophyll and bundle sheath cells to maintain a nitrogen-carbon balance in the C4-dicarboxylic pathway. The polypeptide is Alanine aminotransferase 2 (Panicum miliaceum (Proso millet)).